Here is a 513-residue protein sequence, read N- to C-terminus: Laccase (513 aa).

4 consecutive Plastocyanin-like domains span residues 45 to 81 (PTRL…STHF), 101 to 178 (KTVV…HDPK), 240 to 318 (WPYL…ILAN), and 378 to 509 (QDEY…MDIT). His-105, His-107, His-153, and His-155 together coordinate Cu cation. 8 residues coordinate Cu cation: His-419, His-422, His-424, His-491, Cys-492, His-493, His-497, and Met-502.

This sequence belongs to the multicopper oxidase family. Monomer. Cu(2+) serves as cofactor.

The protein localises to the spore coat. The enzyme catalyses 4 hydroquinone + O2 = 4 benzosemiquinone + 2 H2O. It catalyses the reaction 2 (4Z,15Z)-bilirubin IXalpha + O2 = 2 biliverdin IXalpha + 2 H2O. Its activity is regulated as follows. Inhibited by azide. In terms of biological role, multicopper oxidase that catalyzes the oxidation of a variety of substrates, including phenolic and non-phenolic compounds. Substrates include syringaldazine (SGZ), 2,6-dimethoxyphenol (2,6-DMP) and the non-phenolic compound 2,2'-azino-bis(3-ethylbenzothiazoline-6-sulfonic acid) (ABTS). Has no tyrosinase activity. Is implicated in the biosynthesis of a brownish pigment that characterizes sporulating colonies of B.subtilis, and which appears to be a melanin-like product and to confer protection against UV light. Functionally, in vitro, also shows strong bilirubin oxidase (BOD) activity, and can catalyze the oxidation of free bilirubin (UB), direct bilirubin (conjugated with glucuronic acid, DB) and ditaurobilirubin. In Bacillus subtilis (strain 168), this protein is Laccase.